A 347-amino-acid chain; its full sequence is Protein N-terminal asparagine amidohydrolase (347 aa).

The catalysed reaction is N-terminal L-asparaginyl-[protein] + H2O + H(+) = N-terminal L-aspartyl-[protein] + NH4(+). N-terminal asparagine deamidase that mediates deamidation of N-terminal asparagine residues to aspartate. Required for the ubiquitin-dependent turnover of intracellular proteins that initiate with Met-Asn. These proteins are acetylated on the retained initiator methionine and can subsequently be modified by the removal of N-acetyl methionine by acylaminoacid hydrolase (AAH). Conversion of the resulting N-terminal asparagine to aspartate by NTAN1 renders the protein susceptible to arginylation, polyubiquitination and degradation as specified by the N-end rule. This enzyme does not act on substrates with internal or C-terminal asparagines and does not act on glutamine residues in any position. Does not seem to be involved in immune response, unlike the N-terminal glutamine amidohydrolase NTAQ1. This is Protein N-terminal asparagine amidohydrolase from Arabidopsis thaliana (Mouse-ear cress).